We begin with the raw amino-acid sequence, 208 residues long: Putative adhesin P1-like protein MPN_468 (208 aa).

Disordered regions lie at residues 29–49 (TNGS…VAPT) and 97–172 (DSKT…NLTP). Residues 100 to 132 (TQNNTTTNENHTKFASATGSGQQQGSTTTTSAG) show a composition bias toward low complexity. Over residues 145–158 (SGNSISVQEATSGD) the composition is skewed to polar residues. The span at 159-172 (NLTNYTNLPPNLTP) shows a compositional bias: low complexity.

This sequence belongs to the adhesin P1 family.

The sequence is that of Putative adhesin P1-like protein MPN_468 from Mycoplasma pneumoniae (strain ATCC 29342 / M129 / Subtype 1) (Mycoplasmoides pneumoniae).